The following is a 265-amino-acid chain: Adenosylcobinamide-GDP ribazoletransferase (265 aa).

A run of 5 helical transmembrane segments spans residues 59-79 (LSWI…SVLI), 113-133 (IGTF…LLLV), 141-161 (WIFL…ALLL), 183-203 (LPPF…VYFL), and 206-226 (FQNQ…FVFY).

This sequence belongs to the CobS family. Requires Mg(2+) as cofactor.

The protein resides in the cell inner membrane. The enzyme catalyses alpha-ribazole + adenosylcob(III)inamide-GDP = adenosylcob(III)alamin + GMP + H(+). It carries out the reaction alpha-ribazole 5'-phosphate + adenosylcob(III)inamide-GDP = adenosylcob(III)alamin 5'-phosphate + GMP + H(+). It functions in the pathway cofactor biosynthesis; adenosylcobalamin biosynthesis; adenosylcobalamin from cob(II)yrinate a,c-diamide: step 7/7. Its function is as follows. Joins adenosylcobinamide-GDP and alpha-ribazole to generate adenosylcobalamin (Ado-cobalamin). Also synthesizes adenosylcobalamin 5'-phosphate from adenosylcobinamide-GDP and alpha-ribazole 5'-phosphate. This chain is Adenosylcobinamide-GDP ribazoletransferase, found in Leptospira interrogans serogroup Icterohaemorrhagiae serovar copenhageni (strain Fiocruz L1-130).